Here is a 228-residue protein sequence, read N- to C-terminus: UPF0758 protein CKR_0778 (228 aa).

Residues 106 to 228 (RICSPQDAAV…FISLKEKGIL (123 aa)) form the MPN domain. H177, H179, and D190 together coordinate Zn(2+). A JAMM motif motif is present at residues 177-190 (HNHPSGDPSPSNED).

It belongs to the UPF0758 family.

The chain is UPF0758 protein CKR_0778 from Clostridium kluyveri (strain NBRC 12016).